A 271-amino-acid chain; its full sequence is Orotidine 5'-phosphate decarboxylase (271 aa).

The active-site Proton donor is K95.

This sequence belongs to the OMP decarboxylase family. Type 2 subfamily.

The catalysed reaction is orotidine 5'-phosphate + H(+) = UMP + CO2. It participates in pyrimidine metabolism; UMP biosynthesis via de novo pathway; UMP from orotate: step 2/2. This is Orotidine 5'-phosphate decarboxylase from Janthinobacterium sp. (strain Marseille) (Minibacterium massiliensis).